Here is a 533-residue protein sequence, read N- to C-terminus: Peptide chain release factor 3 (533 aa).

The region spanning 9-284 (ARRRTFAIIS…ALCELSPPPL (276 aa)) is the tr-type G domain. Residues 18–25 (SHPDAGKT), 95–99 (DTPGH), and 149–152 (NKLD) contribute to the GTP site.

It belongs to the TRAFAC class translation factor GTPase superfamily. Classic translation factor GTPase family. PrfC subfamily.

It is found in the cytoplasm. In terms of biological role, increases the formation of ribosomal termination complexes and stimulates activities of RF-1 and RF-2. It binds guanine nucleotides and has strong preference for UGA stop codons. It may interact directly with the ribosome. The stimulation of RF-1 and RF-2 is significantly reduced by GTP and GDP, but not by GMP. In Cupriavidus necator (strain ATCC 17699 / DSM 428 / KCTC 22496 / NCIMB 10442 / H16 / Stanier 337) (Ralstonia eutropha), this protein is Peptide chain release factor 3.